The primary structure comprises 202 residues: Recombination protein RecR (202 aa).

The C4-type zinc-finger motif lies at 58–73 (CANCGNLTDKKLCDIC). The Toprim domain maps to 81 to 178 (SVITVVEDSM…KVSRIAMGVP (98 aa)).

It belongs to the RecR family.

Functionally, may play a role in DNA repair. It seems to be involved in an RecBC-independent recombinational process of DNA repair. It may act with RecF and RecO. In Finegoldia magna (strain ATCC 29328 / DSM 20472 / WAL 2508) (Peptostreptococcus magnus), this protein is Recombination protein RecR.